A 528-amino-acid polypeptide reads, in one-letter code: GMP synthase [glutamine-hydrolyzing] (528 aa).

The Glutamine amidotransferase type-1 domain occupies 13–204 (SILILDFGSQ…VYKISCCAAD (192 aa)). The active-site Nucleophile is Cys-90. Active-site residues include His-178 and Glu-180. The region spanning 205–403 (WTTETYIEET…LGLPAEIIKR (199 aa)) is the GMPS ATP-PPase domain. 232–238 (SGGVDSS) is a binding site for ATP.

As to quaternary structure, homodimer.

The enzyme catalyses XMP + L-glutamine + ATP + H2O = GMP + L-glutamate + AMP + diphosphate + 2 H(+). It functions in the pathway purine metabolism; GMP biosynthesis; GMP from XMP (L-Gln route): step 1/1. Catalyzes the synthesis of GMP from XMP. This chain is GMP synthase [glutamine-hydrolyzing], found in Prochlorococcus marinus (strain MIT 9215).